Reading from the N-terminus, the 339-residue chain is Anthranilate phosphoribosyltransferase (339 aa).

5-phospho-alpha-D-ribose 1-diphosphate is bound by residues glycine 80, 83–84 (GD), threonine 88, 90–93 (NIST), 108–116 (KHGNRSVSS), and serine 120. Glycine 80 is an anthranilate binding site. Residue serine 92 participates in Mg(2+) binding. Asparagine 111 contributes to the anthranilate binding site. Arginine 166 contributes to the anthranilate binding site. Residues aspartate 225 and glutamate 226 each coordinate Mg(2+).

It belongs to the anthranilate phosphoribosyltransferase family. Homodimer. Requires Mg(2+) as cofactor.

It carries out the reaction N-(5-phospho-beta-D-ribosyl)anthranilate + diphosphate = 5-phospho-alpha-D-ribose 1-diphosphate + anthranilate. Its pathway is amino-acid biosynthesis; L-tryptophan biosynthesis; L-tryptophan from chorismate: step 2/5. Its function is as follows. Catalyzes the transfer of the phosphoribosyl group of 5-phosphorylribose-1-pyrophosphate (PRPP) to anthranilate to yield N-(5'-phosphoribosyl)-anthranilate (PRA). This Moorella thermoacetica (strain ATCC 39073 / JCM 9320) protein is Anthranilate phosphoribosyltransferase.